We begin with the raw amino-acid sequence, 241 residues long: Demethylmenaquinone methyltransferase (241 aa).

S-adenosyl-L-methionine is bound by residues Thr60, Asp81, and 106 to 107; that span reads DA.

It belongs to the class I-like SAM-binding methyltransferase superfamily. MenG/UbiE family.

The enzyme catalyses a 2-demethylmenaquinol + S-adenosyl-L-methionine = a menaquinol + S-adenosyl-L-homocysteine + H(+). It participates in quinol/quinone metabolism; menaquinone biosynthesis; menaquinol from 1,4-dihydroxy-2-naphthoate: step 2/2. In terms of biological role, methyltransferase required for the conversion of demethylmenaquinol (DMKH2) to menaquinol (MKH2). The sequence is that of Demethylmenaquinone methyltransferase from Staphylococcus carnosus (strain TM300).